A 217-amino-acid chain; its full sequence is 3,4-dihydroxy-2-butanone 4-phosphate synthase (217 aa).

Residues 37-38, aspartate 42, 150-154, and glutamate 174 each bind D-ribulose 5-phosphate; these read RE and RGGHT. Mg(2+) is bound at residue glutamate 38. Histidine 153 contributes to the Mg(2+) binding site.

The protein belongs to the DHBP synthase family. As to quaternary structure, homodimer. The cofactor is Mg(2+). It depends on Mn(2+) as a cofactor.

The enzyme catalyses D-ribulose 5-phosphate = (2S)-2-hydroxy-3-oxobutyl phosphate + formate + H(+). Its pathway is cofactor biosynthesis; riboflavin biosynthesis; 2-hydroxy-3-oxobutyl phosphate from D-ribulose 5-phosphate: step 1/1. Catalyzes the conversion of D-ribulose 5-phosphate to formate and 3,4-dihydroxy-2-butanone 4-phosphate. The protein is 3,4-dihydroxy-2-butanone 4-phosphate synthase of Escherichia coli O127:H6 (strain E2348/69 / EPEC).